The following is a 177-amino-acid chain: Cytidylate kinase (177 aa).

7–15 (GSPGSGTTT) is an ATP binding site.

The protein belongs to the cytidylate kinase family. Type 2 subfamily.

Its subcellular location is the cytoplasm. The enzyme catalyses CMP + ATP = CDP + ADP. The catalysed reaction is dCMP + ATP = dCDP + ADP. The protein is Cytidylate kinase of Methanocorpusculum labreanum (strain ATCC 43576 / DSM 4855 / Z).